Consider the following 115-residue polypeptide: Aspartate 1-decarboxylase (115 aa).

Residue serine 25 is the Schiff-base intermediate with substrate; via pyruvic acid of the active site. Residue serine 25 is modified to Pyruvic acid (Ser). Threonine 57 is a binding site for substrate. The active-site Proton donor is tyrosine 58. 71–73 provides a ligand contact to substrate; sequence GAA.

Belongs to the PanD family. Heterooctamer of four alpha and four beta subunits. Pyruvate is required as a cofactor. Post-translationally, is synthesized initially as an inactive proenzyme, which is activated by self-cleavage at a specific serine bond to produce a beta-subunit with a hydroxyl group at its C-terminus and an alpha-subunit with a pyruvoyl group at its N-terminus.

It is found in the cytoplasm. It carries out the reaction L-aspartate + H(+) = beta-alanine + CO2. It participates in cofactor biosynthesis; (R)-pantothenate biosynthesis; beta-alanine from L-aspartate: step 1/1. Functionally, catalyzes the pyruvoyl-dependent decarboxylation of aspartate to produce beta-alanine. This Campylobacter concisus (strain 13826) protein is Aspartate 1-decarboxylase.